The following is a 785-amino-acid chain: Probably inactive leucine-rich repeat receptor-like protein kinase At5g58150 (785 aa).

The signal sequence occupies residues 1 to 21 (MRLSLWGSLLFFSFFVKHLTS). At 22-436 (LDPNTDAYHL…KVNKKNTGLK (415 aa)) the chain is on the extracellular side. LRR repeat units follow at residues 64–88 (SENV…TIGK), 89–112 (MSKL…LWSL), 114–136 (LLES…IGNF), 138–160 (SLHT…ISNL), 161–184 (VNLT…LVHC), 186–208 (SLLS…FGSA), 210–232 (PLLK…VLHE), 236–258 (TVDL…HKHN), 259–283 (WSSL…LSSA), 284–306 (HKLG…EIGK), 307–330 (LSAL…EISR), 331–355 (LSHL…SVKN), 357–377 (EVLD…LLEK), and 379–405 (AMMQ…TIQR). The N-linked (GlcNAc...) asparagine glycan is linked to asparagine 119. N-linked (GlcNAc...) asparagine glycans are attached at residues asparagine 162, asparagine 198, asparagine 216, and asparagine 258. N-linked (GlcNAc...) asparagine glycosylation is found at asparagine 314, asparagine 319, and asparagine 343. 3 N-linked (GlcNAc...) asparagine glycosylation sites follow: asparagine 385, asparagine 390, and asparagine 397. The chain crosses the membrane as a helical span at residues 437 to 457 (IGLGLAISMAFLLIGLLLILV). At 458-785 (ALRVRRKSRT…GLLKDISPNY (328 aa)) the chain is on the cytoplasmic side. Phosphothreonine occurs at positions 510 and 518. The 265-residue stretch at 521–785 (FDRGTMLWEG…GLLKDISPNY (265 aa)) folds into the Protein kinase domain. ATP is bound by residues 527–535 (LWEGKSGPT) and lysine 549. Residues tyrosine 594 and tyrosine 683 each carry the phosphotyrosine modification.

Belongs to the protein kinase superfamily. Ser/Thr protein kinase family.

It localises to the cell membrane. The polypeptide is Probably inactive leucine-rich repeat receptor-like protein kinase At5g58150 (Arabidopsis thaliana (Mouse-ear cress)).